The sequence spans 1453 residues: ABC transporter G family member 34 (1453 aa).

A disordered region spans residues 1-24; sequence MLGRDEDLVRTMSGRGSLGSTSHR. An ABC transporter 1 domain is found at 173–446; the sequence is LGLFHLLPSK…FEYMGFKCPE (274 aa). 206–213 contacts ATP; sequence GPPSSGKT. In terms of domain architecture, ABC transmembrane type-2 1 spans 524–737; sequence DLFKACFDRE…GQTALVINEF (214 aa). A run of 6 helical transmembrane segments spans residues 542-562, 582-602, 621-641, 661-681, 687-707, and 773-793; these read FVYV…MTVY, LFFS…FTVM, FALP…VIWI, LLAY…LGAL, IANS…GFII, and FWIC…CYII. Residues 852-1105 enclose the ABC transporter 2 domain; that stretch reads LAFNNVNYYV…LVEYFEAIEG (254 aa). 897 to 904 is an ATP binding site; it reads GVSGAGKT. Positions 1177 to 1391 constitute an ABC transmembrane type-2 2 domain; it reads TQTKACFWKM…TLYGIITSQV (215 aa). 7 helical membrane passes run 1196 to 1216, 1230 to 1250, 1289 to 1309, 1311 to 1331, 1341 to 1361, 1366 to 1386, and 1422 to 1442; these read YNAI…LLFW, NFFG…AATV, IQTG…WTVV, FFWF…YGMM, IAGI…GFLI, IPIW…LYGI, and FLPV…FAFA.

This sequence belongs to the ABC transporter superfamily. ABCG family. PDR (TC 3.A.1.205) subfamily. As to expression, expressed in roots at low levels.

The protein resides in the membrane. In terms of biological role, may be a general defense protein. The protein is ABC transporter G family member 34 (ABCG34) of Arabidopsis thaliana (Mouse-ear cress).